The following is a 607-amino-acid chain: Glutamine--fructose-6-phosphate aminotransferase [isomerizing] (607 aa).

Residue cysteine 2 is the Nucleophile; for GATase activity of the active site. The Glutamine amidotransferase type-2 domain occupies 2 to 217; that stretch reads CGIIGILGKK…DGDWAVLTRE (216 aa). SIS domains follow at residues 277 to 422 and 455 to 597; these read TVRS…QRGS and ICRD…VDQP. Lysine 602 serves as the catalytic For Fru-6P isomerization activity.

Homodimer.

The protein localises to the cytoplasm. The catalysed reaction is D-fructose 6-phosphate + L-glutamine = D-glucosamine 6-phosphate + L-glutamate. In terms of biological role, catalyzes the first step in hexosamine metabolism, converting fructose-6P into glucosamine-6P using glutamine as a nitrogen source. This chain is Glutamine--fructose-6-phosphate aminotransferase [isomerizing], found in Bartonella quintana (strain Toulouse) (Rochalimaea quintana).